We begin with the raw amino-acid sequence, 248 residues long: tRNA (guanine-N(1)-)-methyltransferase (248 aa).

S-adenosyl-L-methionine-binding positions include Gly113 and 133–138 (VGDYVL).

The protein belongs to the RNA methyltransferase TrmD family. As to quaternary structure, homodimer.

It is found in the cytoplasm. The catalysed reaction is guanosine(37) in tRNA + S-adenosyl-L-methionine = N(1)-methylguanosine(37) in tRNA + S-adenosyl-L-homocysteine + H(+). In terms of biological role, specifically methylates guanosine-37 in various tRNAs. This chain is tRNA (guanine-N(1)-)-methyltransferase, found in Shewanella oneidensis (strain ATCC 700550 / JCM 31522 / CIP 106686 / LMG 19005 / NCIMB 14063 / MR-1).